We begin with the raw amino-acid sequence, 629 residues long: MPSTRNIETHNDSNPTLRALSLSALGIVYGDIGTSPLYTFKTVILLAGGGTPAVNTIMGSVSLIIWTLIIIASVKYIHFALRIDNDGEGGILALMSLLSLKLKQRPFIIAVGLMGAALIYGDGTITPAISVLSAVEGLEILSPSLKYYVLPIAITILITLFAIQSKGTATIGKAFGPVMAFWFLTIGILGARGVIQHPSVLAAINPIYGLSFLFSNGATGFFILCGVFLCVTGAEALYADLGHFGTAPIRCAWFGLAFPSLIFNYLGQAALVLEGASTEHNIFYMLCPGDFLLPLIILSTVATIIASQAIITGAFSMTRQAMQLGWLPRLRVTQTSSEGYGQIYIGVVNWLLMLATLGLTIGFGSSEKLAAAYGIAVSATMLCTTLLLFIALHKLWKWDIITSGLVAGLFMIVDASFFAANLTKFINGGYIPITLAIIIYSMMYIWHKGYQTIAIKQKEKNITVASFLDSIQKERVVRVPKTAVFLTSKEQDIPPILVWHVKKNHVLQDKVIILKINNLSIPRCKPGDRLQIVETGTGIWHAVANYGFMEQPHIPKLLKKLEAQGYDINIKDITYYIGHETIFVRNVRHTLSKYIKILFVFMHRNALPMSNYFHLPPESVFEIGRQIEI.

12 helical membrane passes run 20–40, 61–81, 106–126, 143–163, 171–191, 209–229, 253–273, 291–311, 343–363, 372–392, 400–420, and 425–445; these read LSLS…LYTF, VSLI…HFAL, PFII…GTIT, PSLK…LFAI, IGKA…ILGA, GLSF…GVFL, WFGL…ALVL, FLLP…QAII, IYIG…TIGF, AYGI…FIAL, IITS…FFAA, and FING…MMYI.

The protein belongs to the HAK/KUP transporter (TC 2.A.72) family.

The protein localises to the cell inner membrane. It catalyses the reaction K(+)(in) + H(+)(in) = K(+)(out) + H(+)(out). In terms of biological role, transport of potassium into the cell. Likely operates as a K(+):H(+) symporter. In Legionella pneumophila subsp. pneumophila (strain Philadelphia 1 / ATCC 33152 / DSM 7513), this protein is Probable potassium transport system protein Kup 3.